A 1052-amino-acid chain; its full sequence is RTX-III toxin determinant A from serotype 8 (1052 aa).

The next 3 helical transmembrane spans lie at 248–265, 275–334, and 372–418; these read GLDI…SFAL, KVAA…LRVA, and DASI…GILE. Hemolysin-type calcium-binding repeat units follow at residues 744-761, 762-779, 780-797, 798-815, 826-843, and 844-861; these read KGSK…DDLL, NGND…NDEL, RGDN…NDKL, LGGN…NDEL, RGGK…SDLL, and DGGE…SDFY.

This sequence belongs to the RTX prokaryotic toxin (TC 1.C.11) family. Post-translationally, palmitoylated by ApxIIIC. The toxin only becomes active when modified.

The protein localises to the secreted. Its subcellular location is the host cell membrane. In terms of biological role, does not have hemolytic activity but shows a strong cytotoxicity towards alveolar macrophages and neutrophils. This chain is RTX-III toxin determinant A from serotype 8 (apxIIIA), found in Actinobacillus pleuropneumoniae (Haemophilus pleuropneumoniae).